We begin with the raw amino-acid sequence, 388 residues long: Probable peptidoglycan glycosyltransferase FtsW (388 aa).

Residues 1-19 are Cytoplasmic-facing; it reads MSAAAPKPRPAHRFHIDQT. Residues 20–40 traverse the membrane as a helical segment; it reads LLSVCLCLLGIGFVMVASSSM. The Periplasmic segment spans residues 41–57; it reads HLGVKMADDVSYYPFKQ. A helical membrane pass occupies residues 58-78; that stretch reads LVHIILGLMFAAAILAIPMKY. Residues 79–85 are Cytoplasmic-facing; the sequence is WQKIGQP. Residues 86-106 traverse the membrane as a helical segment; sequence LFIVGLVLLLVVLIPGVGVKV. The Periplasmic portion of the chain corresponds to 107 to 117; that stretch reads NGSTRWLSLLG. The chain crosses the membrane as a helical span at residues 118–137; the sequence is LRIQVSEVMKFISVVYMAGY. The Cytoplasmic portion of the chain corresponds to 138–147; sequence ITRHSDHVRH. The helical transmembrane segment at 148-168 threads the bilayer; sequence SIFGLLRPLMLLSVASILLLL. Topologically, residues 169-170 are periplasmic; it reads EP. Residues 171 to 191 form a helical membrane-spanning segment; it reads DFGSAVVILIIAMGMMFLGGA. Position 192 (R192) is a topological domain, cytoplasmic. Residues 193 to 213 form a helical membrane-spanning segment; the sequence is LSPFVALVALISSAGAILASS. Over 214–271 the chain is Periplasmic; the sequence is ADYRVKRMTSFLNPWEHARDSGYQLTQALISFGRGEVSGVGLGNGLQKLFYLPEAHTD. Residues 272–292 traverse the membrane as a helical segment; it reads FLFSVLGEELGLVGVTLVIAL. Over 293–315 the chain is Cytoplasmic; sequence FTTLVVRGFSIGEQAEAAGERFS. A helical membrane pass occupies residues 316–336; sequence ALVAYGLVIWFGFQAFVNMGV. The Periplasmic portion of the chain corresponds to 337 to 348; it reads NMGILPTKGLTL. A helical transmembrane segment spans residues 349-369; the sequence is PLMSYGGGSMIVMCGAMAVLF. Over 370 to 388 the chain is Cytoplasmic; sequence RIHYEVTELHKSNIKGKSR.

It belongs to the SEDS family. FtsW subfamily.

It localises to the cell inner membrane. It carries out the reaction [GlcNAc-(1-&gt;4)-Mur2Ac(oyl-L-Ala-gamma-D-Glu-L-Lys-D-Ala-D-Ala)](n)-di-trans,octa-cis-undecaprenyl diphosphate + beta-D-GlcNAc-(1-&gt;4)-Mur2Ac(oyl-L-Ala-gamma-D-Glu-L-Lys-D-Ala-D-Ala)-di-trans,octa-cis-undecaprenyl diphosphate = [GlcNAc-(1-&gt;4)-Mur2Ac(oyl-L-Ala-gamma-D-Glu-L-Lys-D-Ala-D-Ala)](n+1)-di-trans,octa-cis-undecaprenyl diphosphate + di-trans,octa-cis-undecaprenyl diphosphate + H(+). It participates in cell wall biogenesis; peptidoglycan biosynthesis. Its function is as follows. Peptidoglycan polymerase that is essential for cell division. This chain is Probable peptidoglycan glycosyltransferase FtsW, found in Methylomonas methanica (strain DSM 25384 / MC09).